Consider the following 104-residue polypeptide: Protein U9 (104 aa).

A helical transmembrane segment spans residues 37-54; sequence GVQGLNADCSYVKSQCIK.

It is found in the host membrane. This is Protein U9 (U9) from Human herpesvirus 6B (HHV-6 variant B).